Consider the following 419-residue polypeptide: MERHSLNTSVKMPVSASLACKNYDYDYDSIQPYFYFDNDDEDFYHHQQGQTQPSAPSEDIWKKFELLPTPPLSPSRRQSLSTAEQLEMVSEFLGDDVVSQSFICDDADYSQSFIKSIIIQDCMWSGFSAAAKLEKVVSERLASLHAERKELMSDSNSNRLNASYLQDLSTSASECIDPSVVFPYPLTECGKAGKVASPQPMLVLDTPPNSSSSSGSDSEDEEEEDEEEEEEEEEEEEEEEEEEIDVVTVEKRQKRHETDASESRYPSPLVLKRCHVSTHQHNYAAHPSTRHDQPAVKRLRLEASNNHSINSSSSNRHVKQRKCASPRTSDSEDNDKRRTHNVLERQRRNELKLSFFALRDEIPEVANNEKAAKVVILKKATECIHSMQLDEQRLLSIKEQLRRKSEQLKHRLQQLRSSH.

O-linked (GlcNAc) threonine glycosylation is present at T69. Positions 87–95 (EMVSEFLGD) match the 9aaTAD motif. Disordered regions lie at residues 199 to 269 (QPML…PSPL) and 305 to 343 (NNHSINSSSSNRHVKQRKCASPRTSDSEDNDKRRTHNVL). The segment covering 217–245 (DSEDEEEEDEEEEEEEEEEEEEEEEEEID) has biased composition (acidic residues). The span at 248 to 262 (TVEKRQKRHETDASE) shows a compositional bias: basic and acidic residues. Residues 305–315 (NNHSINSSSSN) are compositionally biased toward low complexity. Positions 335–387 (DKRRTHNVLERQRRNELKLSFFALRDEIPEVANNEKAAKVVILKKATECIHSM) constitute a bHLH domain. Residues 394–415 (LLSIKEQLRRKSEQLKHRLQQL) are leucine-zipper.

In terms of assembly, efficient DNA binding requires dimerization with another bHLH protein. Binds DNA as a heterodimer with max. High levels are seen in the kidney, gills and uterus.

It is found in the nucleus. Its function is as follows. Transcription factor that binds DNA in a non-specific manner, yet also specifically recognizes the core sequence 5'-CAC[GA]TG-3'. Activates the transcription of growth-related genes. This chain is Transcriptional regulator Myc-A (myca), found in Danio rerio (Zebrafish).